Consider the following 619-residue polypeptide: TOX high mobility group box family member 4 (619 aa).

Disordered stretches follow at residues 153–227 (LGLS…QKPV) and 304–337 (DMDPAPPSQTPSPPPVAAADPASPAPASTEPPAL). Position 176 is a phosphothreonine (Thr-176). Ser-178, Ser-181, and Ser-182 each carry phosphoserine. The segment covering 183-193 (LHEDGVEEFRR) has biased composition (basic and acidic residues). Basic residues predominate over residues 208 to 218 (KQKAPKKRKKK). The short motif at 213 to 218 (KKRKKK) is the Nuclear localization signal element. A DNA-binding region (HMG box) is located at residues 223 to 291 (PQKPVSAYAL…EYLKALAAYK (69 aa)). Positions 307–319 (PAPPSQTPSPPPV) are enriched in pro residues. Thr-313 is modified (phosphothreonine). Phosphoserine is present on Ser-315. The segment covering 320 to 337 (AAADPASPAPASTEPPAL) has biased composition (low complexity). At Arg-479 the chain carries Asymmetric dimethylarginine. Residues 507–529 (PPPVESSPEQPVNNSPETHTVEE) form a disordered region. A compositionally biased stretch (low complexity) spans 512–524 (SSPEQPVNNSPET). 5 positions are modified to phosphoserine: Ser-548, Ser-550, Ser-558, Ser-560, and Ser-565.

As to quaternary structure, component of the PNUTS-PP1 phosphatase complex, composed of PPP1R10/PNUTS, TOX4, WDR82 and PPP1CA or PPP1CB or PPP1CC. Interacts with PPP1R10/PNUTS. Interacts with FOXO1 and CREB1 (increased by cAMP); FOXO1 and CREB1 are required for full induction of TOX4-dependent activity and the interactions are inhibited by insulin.

The protein localises to the nucleus. Its subcellular location is the chromosome. With respect to regulation, in liver, recruited to target gene promoters following treatment with dexamethasone and cAMP. Binding is decreased in presence of insulin. Transcription factor that modulates cell fate reprogramming from the somatic state to the pluripotent and neuronal fate. In liver, controls the expression of hormone-regulated gluconeogenic genes such as G6PC1 and PCK1. This regulation is independent of the insulin receptor activation. Also acts as a regulatory component of protein phosphatase 1 (PP1) complexes. Component of the PNUTS-PP1 protein phosphatase complex, a PP1 complex that regulates RNA polymerase II transcription pause-release. PNUTS-PP1 also plays a role in the control of chromatin structure and cell cycle progression during the transition from mitosis into interphase. This is TOX high mobility group box family member 4 (TOX4) from Bos taurus (Bovine).